The chain runs to 1375 residues: DNA-directed RNA polymerase subunit beta' (1375 aa).

4 residues coordinate Zn(2+): C70, C72, C85, and C88. Residues D460, D462, and D464 each contribute to the Mg(2+) site. Zn(2+) contacts are provided by C800, C874, C881, and C884.

Belongs to the RNA polymerase beta' chain family. As to quaternary structure, the RNAP catalytic core consists of 2 alpha, 1 beta, 1 beta' and 1 omega subunit. When a sigma factor is associated with the core the holoenzyme is formed, which can initiate transcription. Mg(2+) is required as a cofactor. It depends on Zn(2+) as a cofactor.

The enzyme catalyses RNA(n) + a ribonucleoside 5'-triphosphate = RNA(n+1) + diphosphate. Functionally, DNA-dependent RNA polymerase catalyzes the transcription of DNA into RNA using the four ribonucleoside triphosphates as substrates. The chain is DNA-directed RNA polymerase subunit beta' from Bdellovibrio bacteriovorus (strain ATCC 15356 / DSM 50701 / NCIMB 9529 / HD100).